The following is a 963-amino-acid chain: Protein translocase subunit SecA (963 aa).

ATP contacts are provided by residues glutamine 87, 105–109, and aspartate 512; that span reads GEGKT. Disordered stretches follow at residues 868–909 and 924–963; these read GPVM…EDFT and QFVG…CHGS. Acidic residues predominate over residues 874–886; it reads PDEEEDGDEDSVE. Zn(2+) is bound by residues cysteine 949, cysteine 951, cysteine 960, and histidine 961.

It belongs to the SecA family. In terms of assembly, monomer and homodimer. Part of the essential Sec protein translocation apparatus which comprises SecA, SecYEG and auxiliary proteins SecDF. Other proteins may also be involved. It depends on Zn(2+) as a cofactor.

Its subcellular location is the cell inner membrane. It localises to the cytoplasm. It catalyses the reaction ATP + H2O + cellular proteinSide 1 = ADP + phosphate + cellular proteinSide 2.. In terms of biological role, part of the Sec protein translocase complex. Interacts with the SecYEG preprotein conducting channel. Has a central role in coupling the hydrolysis of ATP to the transfer of proteins into and across the cell membrane, serving as an ATP-driven molecular motor driving the stepwise translocation of polypeptide chains across the membrane. The chain is Protein translocase subunit SecA from Solibacter usitatus (strain Ellin6076).